Reading from the N-terminus, the 23-residue chain is Potassium channel toxin alpha-KTx 13.1 (23 aa).

Intrachain disulfides connect Cys-2/Cys-15, Cys-5/Cys-20, and Cys-9/Cys-22. An interaction with Ca(2+)-activated K(+) channels region spans residues 13–20 (GKCINGRC).

Expressed by the venom gland.

The protein resides in the secreted. Functionally, blocks reversibly Shaker B potassium channels. Also displaces binding of noxiustoxin to mouse brain synaptosome membranes. The sequence is that of Potassium channel toxin alpha-KTx 13.1 from Tityus obscurus (Amazonian scorpion).